Consider the following 31-residue polypeptide: Cytochrome b6-f complex subunit 6 (31 aa).

Residues 4 to 24 (ITSYFGFLLAALTITSVLFIG) traverse the membrane as a helical segment.

It belongs to the PetL family. In terms of assembly, the 4 large subunits of the cytochrome b6-f complex are cytochrome b6, subunit IV (17 kDa polypeptide, PetD), cytochrome f and the Rieske protein, while the 4 small subunits are PetG, PetL, PetM and PetN. The complex functions as a dimer.

Its subcellular location is the plastid. The protein resides in the chloroplast thylakoid membrane. Functionally, component of the cytochrome b6-f complex, which mediates electron transfer between photosystem II (PSII) and photosystem I (PSI), cyclic electron flow around PSI, and state transitions. PetL is important for photoautotrophic growth as well as for electron transfer efficiency and stability of the cytochrome b6-f complex. The sequence is that of Cytochrome b6-f complex subunit 6 from Nandina domestica (Heavenly bamboo).